The primary structure comprises 238 residues: Probable solute-binding protein AdeT2 (238 aa).

It belongs to the bacterial solute-binding protein 7 family.

In terms of biological role, mediates antimicrobial resistance via active efflux. Contributes to resistance to antibiotics such as chloramphenicol, erythromycin and novobiocin. May be part of a tripartite ATP-independent periplasmic (TRAP) transport system. The sequence is that of Probable solute-binding protein AdeT2 from Acinetobacter baumannii.